A 330-amino-acid chain; its full sequence is Aspartate--ammonia ligase (330 aa).

The protein belongs to the class-II aminoacyl-tRNA synthetase family. AsnA subfamily. In terms of assembly, homodimer.

The protein resides in the cytoplasm. The catalysed reaction is L-aspartate + NH4(+) + ATP = L-asparagine + AMP + diphosphate + H(+). The protein operates within amino-acid biosynthesis; L-asparagine biosynthesis; L-asparagine from L-aspartate (ammonia route): step 1/1. The polypeptide is Aspartate--ammonia ligase (Salmonella typhimurium (strain LT2 / SGSC1412 / ATCC 700720)).